Here is a 93-residue protein sequence, read N- to C-terminus: Small ribosomal subunit protein uS19 (93 aa).

It belongs to the universal ribosomal protein uS19 family.

Functionally, protein S19 forms a complex with S13 that binds strongly to the 16S ribosomal RNA. This is Small ribosomal subunit protein uS19 from Pediococcus pentosaceus (strain ATCC 25745 / CCUG 21536 / LMG 10740 / 183-1w).